The following is a 272-amino-acid chain: Pantothenate synthetase (272 aa).

Residue 27–34 (MGALHNGH) participates in ATP binding. The Proton donor role is filled by H34. Q58 contributes to the (R)-pantoate binding site. Residue Q58 coordinates beta-alanine. 143–146 (GKKD) is a binding site for ATP. (R)-pantoate is bound at residue Q149. Residues V172 and 180-183 (LSSR) each bind ATP.

The protein belongs to the pantothenate synthetase family. Homodimer.

It localises to the cytoplasm. It catalyses the reaction (R)-pantoate + beta-alanine + ATP = (R)-pantothenate + AMP + diphosphate + H(+). It functions in the pathway cofactor biosynthesis; (R)-pantothenate biosynthesis; (R)-pantothenate from (R)-pantoate and beta-alanine: step 1/1. Catalyzes the condensation of pantoate with beta-alanine in an ATP-dependent reaction via a pantoyl-adenylate intermediate. This is Pantothenate synthetase from Aliarcobacter butzleri (strain RM4018) (Arcobacter butzleri).